The following is a 252-amino-acid chain: Imidazole glycerol phosphate synthase subunit HisF (252 aa).

Residues Asp11 and Asp130 contribute to the active site.

This sequence belongs to the HisA/HisF family. In terms of assembly, heterodimer of HisH and HisF.

It is found in the cytoplasm. It carries out the reaction 5-[(5-phospho-1-deoxy-D-ribulos-1-ylimino)methylamino]-1-(5-phospho-beta-D-ribosyl)imidazole-4-carboxamide + L-glutamine = D-erythro-1-(imidazol-4-yl)glycerol 3-phosphate + 5-amino-1-(5-phospho-beta-D-ribosyl)imidazole-4-carboxamide + L-glutamate + H(+). Its pathway is amino-acid biosynthesis; L-histidine biosynthesis; L-histidine from 5-phospho-alpha-D-ribose 1-diphosphate: step 5/9. In terms of biological role, IGPS catalyzes the conversion of PRFAR and glutamine to IGP, AICAR and glutamate. The HisF subunit catalyzes the cyclization activity that produces IGP and AICAR from PRFAR using the ammonia provided by the HisH subunit. The polypeptide is Imidazole glycerol phosphate synthase subunit HisF (Desulforamulus reducens (strain ATCC BAA-1160 / DSM 100696 / MI-1) (Desulfotomaculum reducens)).